The following is a 523-amino-acid chain: Transcription factor MYB120 (523 aa).

2 HTH myb-type domains span residues 23-75 and 76-130; these read GVIL…ANHL and RPNL…KRLL. 2 consecutive DNA-binding regions (H-T-H motif) follow at residues 51-75 and 103-126; these read WNAV…ANHL and WARM…NTRL. 4 disordered regions span residues 140 to 254, 332 to 373, 396 to 426, and 444 to 470; these read DIIP…YPTL, QTAT…SHYT, QIPQ…GAHR, and LASG…NNTN. Over residues 147–167 the composition is skewed to basic residues; that stretch reads LHPHPHHQQQQQHNHHHHHHQ. Over residues 175–185 the composition is skewed to polar residues; it reads MYFQPQSSQRN. 3 stretches are compositionally biased toward low complexity: residues 202–212, 223–232, and 341–368; these read SSSSFTFHTTT, TPNTPSQLSS, and NPYS…PSFL. Residues 396-410 show a composition bias toward polar residues; that stretch reads QIPQIDGFNNVNNFT.

As to expression, expressed in pollen grains and pollen tube. Mostly expressed in mature pollen grains, and, to a lower extent, in inflorescences and siliques.

The protein localises to the nucleus. Functionally, transcription activator. Binds to 5'-CAACTGTC-3' and/or 5'-TAACAAA-3' motif in target gene promoter to promote their expression. Together with MYB97 and MYB101, functions as a male factor that controls pollen tube-synergid interaction in fertilization. Required for pollen tube growth arrest and sperm cell release in the female gametophyte, probably via the regulation of pollen tube-specific gene expression. In Arabidopsis thaliana (Mouse-ear cress), this protein is Transcription factor MYB120.